We begin with the raw amino-acid sequence, 208 residues long: Uracil phosphoribosyltransferase (208 aa).

5-phospho-alpha-D-ribose 1-diphosphate-binding positions include R78, R103, and 130–138 (DPMLATGGS). Uracil is bound by residues I193 and 198–200 (GDA). Residue D199 coordinates 5-phospho-alpha-D-ribose 1-diphosphate.

Belongs to the UPRTase family. Mg(2+) serves as cofactor.

It catalyses the reaction UMP + diphosphate = 5-phospho-alpha-D-ribose 1-diphosphate + uracil. The protein operates within pyrimidine metabolism; UMP biosynthesis via salvage pathway; UMP from uracil: step 1/1. Allosterically activated by GTP. Functionally, catalyzes the conversion of uracil and 5-phospho-alpha-D-ribose 1-diphosphate (PRPP) to UMP and diphosphate. The sequence is that of Uracil phosphoribosyltransferase from Trichlorobacter lovleyi (strain ATCC BAA-1151 / DSM 17278 / SZ) (Geobacter lovleyi).